The chain runs to 334 residues: B1 bradykinin receptor (334 aa).

A disordered region spans residues 1-21 (MASQASLKLQPSNQSQQAPPN). The Extracellular portion of the chain corresponds to 1–41 (MASQASLKLQPSNQSQQAPPNITSCEGAPEAWDLLCRVLPG). Positions 10-21 (QPSNQSQQAPPN) are enriched in low complexity. N13 and N21 each carry an N-linked (GlcNAc...) asparagine glycan. Residues 42-62 (FVITVCFFGLLGNLLVLSFFL) traverse the membrane as a helical segment. Topologically, residues 63–80 (LPWRRWWQQRRQRLTIAE) are cytoplasmic. Residues 81–101 (IYLANLAASDLVFVLGLPFWA) form a helical membrane-spanning segment. Topologically, residues 102–118 (ENVGNRFNWPFGSDLCR) are extracellular. C117 and C196 are oxidised to a cystine. Residues 119–139 (VVSGVIKANLFISIFLVVAIS) traverse the membrane as a helical segment. The Cytoplasmic segment spans residues 140 to 161 (QDRYRLLVYPMTSWGNRRRRQA). A helical transmembrane segment spans residues 162 to 182 (QVTCLLIWVAGGLLSTPTFLL). Residues 183–214 (RSVKVVPDLNISACILLFPHEAWHFVRMVELN) are Extracellular-facing. N-linked (GlcNAc...) asparagine glycosylation occurs at N192. A helical transmembrane segment spans residues 215–235 (VLGFLLPLAAILYFNFHILAS). Topologically, residues 236-258 (LRGQKEASRTRCGGPKDSKTMGL) are cytoplasmic. The helical transmembrane segment at 259–279 (ILTLVASFLVCWAPYHFFAFL) threads the bilayer. The Extracellular segment spans residues 280-302 (DFLVQVRVIQDCFWKELTDLGLQ). Residues 303–323 (LANFFAFVNSCLNPLIYVFAG) form a helical membrane-spanning segment. Topologically, residues 324–334 (RLFKTRVLGTL) are cytoplasmic.

This sequence belongs to the G-protein coupled receptor 1 family. Bradykinin receptor subfamily. BDKRB1 sub-subfamily. As to expression, expressed in heart, liver and lung.

The protein localises to the cell membrane. This is a receptor for bradykinin. Could be a factor in chronic pain and inflammation. This Mus musculus (Mouse) protein is B1 bradykinin receptor (Bdkrb1).